A 711-amino-acid chain; its full sequence is Methionine--tRNA ligase (711 aa).

The short motif at 15-25 (PYTNGPIHIGH) is the 'HIGH' region element. 4 residues coordinate Zn(2+): Cys-147, Cys-150, Cys-160, and Cys-163. The 'KMSKS' region motif lies at 336–340 (KLSTS). Thr-339 lines the ATP pocket. Positions 610–711 (DFAKMDIRIG…ADAPNGATVN (102 aa)) constitute a tRNA-binding domain.

The protein belongs to the class-I aminoacyl-tRNA synthetase family. MetG type 1 subfamily. In terms of assembly, homodimer. Zn(2+) is required as a cofactor.

It is found in the cytoplasm. The catalysed reaction is tRNA(Met) + L-methionine + ATP = L-methionyl-tRNA(Met) + AMP + diphosphate. Functionally, is required not only for elongation of protein synthesis but also for the initiation of all mRNA translation through initiator tRNA(fMet) aminoacylation. The chain is Methionine--tRNA ligase from Flavobacterium johnsoniae (strain ATCC 17061 / DSM 2064 / JCM 8514 / BCRC 14874 / CCUG 350202 / NBRC 14942 / NCIMB 11054 / UW101) (Cytophaga johnsonae).